The chain runs to 213 residues: ATP phosphoribosyltransferase (213 aa).

This sequence belongs to the ATP phosphoribosyltransferase family. Short subfamily. Heteromultimer composed of HisG and HisZ subunits.

It is found in the cytoplasm. The catalysed reaction is 1-(5-phospho-beta-D-ribosyl)-ATP + diphosphate = 5-phospho-alpha-D-ribose 1-diphosphate + ATP. The protein operates within amino-acid biosynthesis; L-histidine biosynthesis; L-histidine from 5-phospho-alpha-D-ribose 1-diphosphate: step 1/9. Its function is as follows. Catalyzes the condensation of ATP and 5-phosphoribose 1-diphosphate to form N'-(5'-phosphoribosyl)-ATP (PR-ATP). Has a crucial role in the pathway because the rate of histidine biosynthesis seems to be controlled primarily by regulation of HisG enzymatic activity. The sequence is that of ATP phosphoribosyltransferase from Variovorax paradoxus (strain S110).